A 349-amino-acid polypeptide reads, in one-letter code: Phosphate acyltransferase (349 aa).

It belongs to the PlsX family. Homodimer. Probably interacts with PlsY.

It is found in the cytoplasm. The catalysed reaction is a fatty acyl-[ACP] + phosphate = an acyl phosphate + holo-[ACP]. It functions in the pathway lipid metabolism; phospholipid metabolism. Catalyzes the reversible formation of acyl-phosphate (acyl-PO(4)) from acyl-[acyl-carrier-protein] (acyl-ACP). This enzyme utilizes acyl-ACP as fatty acyl donor, but not acyl-CoA. In Akkermansia muciniphila (strain ATCC BAA-835 / DSM 22959 / JCM 33894 / BCRC 81048 / CCUG 64013 / CIP 107961 / Muc), this protein is Phosphate acyltransferase.